Consider the following 157-residue polypeptide: MKLLFVCLGNICRSPAAENIMNAQIDQAGLGAKIVCDSAGTSSYHVGDSPDRRMTESLKKRGYRVQGRARQFFPEDFAEFDLILAMDGDNYRNILAQDPAGQYHHKVKMICDYTEKFGDREVPDPYYGGQAGFEHVIDLLEDACGNLLTSLGKELVN.

Catalysis depends on Cys-7, which acts as the Nucleophile. Residue Arg-13 is part of the active site. Asp-124 acts as the Proton donor in catalysis.

The protein belongs to the low molecular weight phosphotyrosine protein phosphatase family.

It catalyses the reaction O-phospho-L-tyrosyl-[protein] + H2O = L-tyrosyl-[protein] + phosphate. The sequence is that of Putative low molecular weight protein-tyrosine-phosphatase slr0328 from Synechocystis sp. (strain ATCC 27184 / PCC 6803 / Kazusa).